The primary structure comprises 222 residues: Peptide methionine sulfoxide reductase MsrA (222 aa).

Cys-60 is an active-site residue.

Belongs to the MsrA Met sulfoxide reductase family.

The catalysed reaction is L-methionyl-[protein] + [thioredoxin]-disulfide + H2O = L-methionyl-(S)-S-oxide-[protein] + [thioredoxin]-dithiol. The enzyme catalyses [thioredoxin]-disulfide + L-methionine + H2O = L-methionine (S)-S-oxide + [thioredoxin]-dithiol. Has an important function as a repair enzyme for proteins that have been inactivated by oxidation. Catalyzes the reversible oxidation-reduction of methionine sulfoxide in proteins to methionine. The sequence is that of Peptide methionine sulfoxide reductase MsrA from Pseudomonas putida (strain W619).